The following is a 378-amino-acid chain: Ribosomal RNA large subunit methyltransferase G (378 aa).

The protein belongs to the methyltransferase superfamily. RlmG family.

Its subcellular location is the cytoplasm. The catalysed reaction is guanosine(1835) in 23S rRNA + S-adenosyl-L-methionine = N(2)-methylguanosine(1835) in 23S rRNA + S-adenosyl-L-homocysteine + H(+). In terms of biological role, specifically methylates the guanine in position 1835 (m2G1835) of 23S rRNA. This chain is Ribosomal RNA large subunit methyltransferase G, found in Escherichia coli O1:K1 / APEC.